A 361-amino-acid chain; its full sequence is MSQKERPTFYRQEVNKTIWEVPVQYQNLSPVGSGAYGSVCSAFDAKTGFKVAVKKLSRPFQSIIHAKRTYRELRLLKHMRHENVIGLLDVFTPATSLKEFNDVYLVTHLMGADLNNIVKCQKLTDDHVQFLIYQILRGLKYIHSADIIHRDLKPSNLAVNEDCELKILDFGLARHTDDEMTGYVATRWYRAPEIMLNWMHYNVTVDIWSVGCIMAELLTGRTLFPGTDHINQLQQIMRLTGTPPSSLISRMPSHEARTYISSLPQMPKRNFADVFIGANPQAVDLLEKMLVLDTDKRITAAEALAHPYFAQYHDPDDEPEAEPFDQSFESRELDIEEWKRQTYEEMISFEPPVFDVDEMES.

Residues Tyr25–Phe309 enclose the Protein kinase domain. Residues Val31–Val39 and Lys54 each bind ATP. The active-site Proton acceptor is Asp169. Thr181 carries the post-translational modification Phosphothreonine; by MAP2K3. Residues Thr181–Tyr183 carry the TXY motif. Residue Tyr183 is modified to Phosphotyrosine; by MAP2K3.

This sequence belongs to the protein kinase superfamily. CMGC Ser/Thr protein kinase family. MAP kinase subfamily. Mg(2+) is required as a cofactor. Dually phosphorylated on Thr-181 and Tyr-183, which activates the enzyme.

It localises to the cytoplasm. The protein localises to the nucleus. It carries out the reaction L-seryl-[protein] + ATP = O-phospho-L-seryl-[protein] + ADP + H(+). The catalysed reaction is L-threonyl-[protein] + ATP = O-phospho-L-threonyl-[protein] + ADP + H(+). With respect to regulation, activated by threonine and tyrosine phosphorylation by the dual specificity kinase, MKK3. Functionally, serine/threonine kinase which acts as an essential component of the MAP kinase signal transduction pathway. Mapk14a is one of the four p38 MAPKs which play an important role in the cascades of cellular responses evoked by extracellular stimuli such as pro-inflammatory cytokines or physical stress leading to direct activation of transcription factors. Accordingly, p38 MAPKs phosphorylate a broad range of proteins and it has been estimated that they may have approximately 200 to 300 substrates each. Some of the targets are downstream kinases which are activated through phosphorylation and further phosphorylate additional targets. Required for cytokinesis on the future dorsal side of the blastodisc, suggesting a role in symmetrical and synchronous blastomere cleavage. The polypeptide is Mitogen-activated protein kinase 14A (mapk14a) (Danio rerio (Zebrafish)).